The sequence spans 684 residues: Divalent metal cation transporter MntH (684 aa).

Positions 223 to 250 (PTAINAPSGTPAAGRTSPTPTTDSQRRS) are disordered. Transmembrane regions (helical) follow at residues 283–303 (TSLKTSWYLLGPAFVAAIAYV), 318–340 (FGYLLLWVIVAANVMAALVQYLS), 365–387 (LAYWAQAEIVAMATDVAEVIGGA), 391–413 (RIMFNLPLPIGGIITGVVSLLLL), 427–446 (VITALLLVIAIGFTASFFVV), 467–489 (VLLAAAIMGATVMPHAVYLHSGL), 514–534 (VGLAMLIAGGVNAAMLLVAAL), 555–577 (TLGATIAVLFAVGLLASGLASSS), 597–616 (MLVRRLITLGPALAILTLGF), 621–643 (TLVLSQVVLSFGIPFAVLPLVKL), and 656–678 (HRATTWVGWVVAVMVSLLNVMLI).

The protein in the C-terminal section; belongs to the NRAMP family.

It localises to the cell membrane. Functionally, h(+)-stimulated, divalent metal cation uptake system. This is Divalent metal cation transporter MntH (mntH) from Mycobacterium bovis (strain ATCC BAA-935 / AF2122/97).